The primary structure comprises 508 residues: Sugar transport protein 12 (508 aa).

Over 1–22 the chain is Cytoplasmic; the sequence is MPSVGIVIGDGKKEYPGKLTLY. The next 12 membrane-spanning stretches (helical) occupy residues 23–43, 80–100, 118–138, 141–161, 172–192, 201–221, 294–314, 317–337, 347–367, 383–403, 426–446, and 451–471; these read VTVT…DIGI, VSLT…SLVA, VLFC…MLIV, LLLG…LSEM, IGFQ…NFFF, LSLG…LILP, LTGI…IGFG, AALI…VVSI, FLFL…AAAI, WYAI…AWSW, ITVS…LMML, and FGLF…VYLF. Residues 472–508 lie on the Cytoplasmic side of the membrane; sequence LPETRGVPIEEMNRVWRSHWYWSKFVDAEKNLTKVVI.

Belongs to the major facilitator superfamily. Sugar transporter (TC 2.A.1.1) family.

It localises to the membrane. Mediates an active uptake of hexoses, probably by sugar/hydrogen symport. The protein is Sugar transport protein 12 (STP12) of Arabidopsis thaliana (Mouse-ear cress).